We begin with the raw amino-acid sequence, 141 residues long: Prefoldin subunit alpha (141 aa).

This sequence belongs to the prefoldin subunit alpha family. In terms of assembly, heterohexamer of two alpha and four beta subunits.

It is found in the cytoplasm. Molecular chaperone capable of stabilizing a range of proteins. Seems to fulfill an ATP-independent, HSP70-like function in archaeal de novo protein folding. This Methanothermobacter thermautotrophicus (strain ATCC 29096 / DSM 1053 / JCM 10044 / NBRC 100330 / Delta H) (Methanobacterium thermoautotrophicum) protein is Prefoldin subunit alpha (pfdA).